A 309-amino-acid chain; its full sequence is 4-hydroxy-3-methylbut-2-enyl diphosphate reductase (309 aa).

Cys-12 is a binding site for [4Fe-4S] cluster. (2E)-4-hydroxy-3-methylbut-2-enyl diphosphate-binding residues include His-43 and His-77. Dimethylallyl diphosphate contacts are provided by His-43 and His-77. Positions 43 and 77 each coordinate isopentenyl diphosphate. Residue Cys-99 coordinates [4Fe-4S] cluster. A (2E)-4-hydroxy-3-methylbut-2-enyl diphosphate-binding site is contributed by His-127. Position 127 (His-127) interacts with dimethylallyl diphosphate. Residue His-127 participates in isopentenyl diphosphate binding. Glu-129 acts as the Proton donor in catalysis. (2E)-4-hydroxy-3-methylbut-2-enyl diphosphate is bound at residue Thr-167. Cys-197 contributes to the [4Fe-4S] cluster binding site. Residues Ser-225, Ser-226, Asn-227, and Ser-269 each coordinate (2E)-4-hydroxy-3-methylbut-2-enyl diphosphate. Dimethylallyl diphosphate-binding residues include Ser-225, Ser-226, Asn-227, and Ser-269. Isopentenyl diphosphate contacts are provided by Ser-225, Ser-226, Asn-227, and Ser-269.

This sequence belongs to the IspH family. The cofactor is [4Fe-4S] cluster.

The enzyme catalyses isopentenyl diphosphate + 2 oxidized [2Fe-2S]-[ferredoxin] + H2O = (2E)-4-hydroxy-3-methylbut-2-enyl diphosphate + 2 reduced [2Fe-2S]-[ferredoxin] + 2 H(+). The catalysed reaction is dimethylallyl diphosphate + 2 oxidized [2Fe-2S]-[ferredoxin] + H2O = (2E)-4-hydroxy-3-methylbut-2-enyl diphosphate + 2 reduced [2Fe-2S]-[ferredoxin] + 2 H(+). It participates in isoprenoid biosynthesis; dimethylallyl diphosphate biosynthesis; dimethylallyl diphosphate from (2E)-4-hydroxy-3-methylbutenyl diphosphate: step 1/1. Its pathway is isoprenoid biosynthesis; isopentenyl diphosphate biosynthesis via DXP pathway; isopentenyl diphosphate from 1-deoxy-D-xylulose 5-phosphate: step 6/6. Its function is as follows. Catalyzes the conversion of 1-hydroxy-2-methyl-2-(E)-butenyl 4-diphosphate (HMBPP) into a mixture of isopentenyl diphosphate (IPP) and dimethylallyl diphosphate (DMAPP). Acts in the terminal step of the DOXP/MEP pathway for isoprenoid precursor biosynthesis. In Wolbachia sp. subsp. Brugia malayi (strain TRS), this protein is 4-hydroxy-3-methylbut-2-enyl diphosphate reductase.